Here is a 510-residue protein sequence, read N- to C-terminus: Beta-glucosidase 26 (510 aa).

The signal sequence occupies residues 1–27; that stretch reads MRKFIAALRLALAAAAHLLLTLPPAQC. Glutamine 59 contributes to the a beta-D-glucoside binding site. N-linked (GlcNAc...) asparagine glycans are attached at residues asparagine 87 and asparagine 127. A beta-D-glucoside is bound by residues histidine 160 and 205–206; that span reads NE. Glutamate 206 (proton donor) is an active-site residue. Cysteine 225 and cysteine 228 are oxidised to a cystine. N-linked (GlcNAc...) asparagine glycosylation occurs at asparagine 233. Tyrosine 345 and glutamate 416 together coordinate a beta-D-glucoside. The Nucleophile role is filled by glutamate 416. Asparagine 424 carries N-linked (GlcNAc...) asparagine glycosylation. Residues tryptophan 463, 470–471, and phenylalanine 479 contribute to the a beta-D-glucoside site; that span reads EW.

Belongs to the glycosyl hydrolase 1 family.

It catalyses the reaction Hydrolysis of terminal, non-reducing beta-D-glucosyl residues with release of beta-D-glucose.. In terms of biological role, hydrolyzes p-nitrophenyl beta-D-glucoside, p-nitrophenyl beta-D-mannoside, p-nitrophenyl beta-D-galactoside, p-nitrophenyl beta-D-xyloside, p-nitrophenyl beta-D-fucoside, p-nitrophenyl beta-L-arabinoside, cello-oligosaccharides, laminari-oligosaccharides and sophorose. This chain is Beta-glucosidase 26 (BGLU26), found in Oryza sativa subsp. japonica (Rice).